Here is a 291-residue protein sequence, read N- to C-terminus: 33 kDa chaperonin (291 aa).

Cystine bridges form between Cys-235/Cys-237 and Cys-268/Cys-271.

This sequence belongs to the HSP33 family. In terms of processing, under oxidizing conditions two disulfide bonds are formed involving the reactive cysteines. Under reducing conditions zinc is bound to the reactive cysteines and the protein is inactive.

The protein localises to the cytoplasm. Functionally, redox regulated molecular chaperone. Protects both thermally unfolding and oxidatively damaged proteins from irreversible aggregation. Plays an important role in the bacterial defense system toward oxidative stress. This Bacillus pumilus (strain SAFR-032) protein is 33 kDa chaperonin.